Consider the following 297-residue polypeptide: Phosphatidylinositol N-acetylglucosaminyltransferase subunit C (297 aa).

Helical transmembrane passes span Val-51–Ile-71, Leu-80–Phe-100, Trp-117–Leu-137, Ser-153–Val-173, Ser-174–Pro-194, Ser-196–Leu-216, Ser-227–Leu-244, and Gly-250–Ile-270.

This sequence belongs to the PIGC family. In terms of assembly, component of the glycosylphosphatidylinositol-N-acetylglucosaminyltransferase (GPI-GnT) complex composed at least by PIGA, PIGC, PIGH, PIGP, PIGQ, PIGY and DPM2. Interacts with PIGQ. Interacts with the heterodimer PIGA:PIGH.

The protein localises to the endoplasmic reticulum membrane. It participates in glycolipid biosynthesis; glycosylphosphatidylinositol-anchor biosynthesis. Part of the glycosylphosphatidylinositol-N-acetylglucosaminyltransferase (GPI-GnT) complex that catalyzes the transfer of N-acetylglucosamine from UDP-N-acetylglucosamine to phosphatidylinositol and participates in the first step of GPI biosynthesis. The chain is Phosphatidylinositol N-acetylglucosaminyltransferase subunit C from Homo sapiens (Human).